The chain runs to 453 residues: uncharacterized protein (453 aa).

One can recognise a TRAM domain in the interval 5–63 (LLKKNQSVELTIEDLTHDGSGVGKIDGYPLFIPNALPGEKITAKITKLNKNYGFARMEN). Positions 76, 82, 85, and 162 each coordinate [4Fe-4S] cluster. Gln285, Tyr314, Glu335, and Asp383 together coordinate S-adenosyl-L-methionine. Cys410 (nucleophile) is an active-site residue.

It belongs to the class I-like SAM-binding methyltransferase superfamily. RNA M5U methyltransferase family.

This is an uncharacterized protein from Listeria innocua serovar 6a (strain ATCC BAA-680 / CLIP 11262).